We begin with the raw amino-acid sequence, 137 residues long: Phosphoribosyl-AMP cyclohydrolase (137 aa).

D84 lines the Mg(2+) pocket. C85 is a Zn(2+) binding site. Mg(2+) contacts are provided by D86 and D88. Zn(2+) is bound by residues C101 and C108.

The protein belongs to the PRA-CH family. In terms of assembly, homodimer. The cofactor is Mg(2+). Zn(2+) is required as a cofactor.

It localises to the cytoplasm. It catalyses the reaction 1-(5-phospho-beta-D-ribosyl)-5'-AMP + H2O = 1-(5-phospho-beta-D-ribosyl)-5-[(5-phospho-beta-D-ribosylamino)methylideneamino]imidazole-4-carboxamide. It participates in amino-acid biosynthesis; L-histidine biosynthesis; L-histidine from 5-phospho-alpha-D-ribose 1-diphosphate: step 3/9. Its function is as follows. Catalyzes the hydrolysis of the adenine ring of phosphoribosyl-AMP. This is Phosphoribosyl-AMP cyclohydrolase from Chlorobaculum parvum (strain DSM 263 / NCIMB 8327) (Chlorobium vibrioforme subsp. thiosulfatophilum).